We begin with the raw amino-acid sequence, 98 residues long: DNA-directed RNA polymerase subunit omega (98 aa).

It belongs to the RNA polymerase subunit omega family. As to quaternary structure, the RNAP catalytic core consists of 2 alpha, 1 beta, 1 beta' and 1 omega subunit. When a sigma factor is associated with the core the holoenzyme is formed, which can initiate transcription.

It catalyses the reaction RNA(n) + a ribonucleoside 5'-triphosphate = RNA(n+1) + diphosphate. Promotes RNA polymerase assembly. Latches the N- and C-terminal regions of the beta' subunit thereby facilitating its interaction with the beta and alpha subunits. This is DNA-directed RNA polymerase subunit omega from Xylella fastidiosa (strain M12).